Here is a 240-residue protein sequence, read N- to C-terminus: tRNA (guanine-N(1)-)-methyltransferase (240 aa).

S-adenosyl-L-methionine contacts are provided by residues G108 and 127-132 (LGDYIL).

It belongs to the RNA methyltransferase TrmD family. In terms of assembly, homodimer.

The protein resides in the cytoplasm. It carries out the reaction guanosine(37) in tRNA + S-adenosyl-L-methionine = N(1)-methylguanosine(37) in tRNA + S-adenosyl-L-homocysteine + H(+). Functionally, specifically methylates guanosine-37 in various tRNAs. The polypeptide is tRNA (guanine-N(1)-)-methyltransferase (Streptococcus sanguinis (strain SK36)).